Consider the following 260-residue polypeptide: Proteasome subunit alpha (260 aa).

The tract at residues 231 to 260 (LLPEDFSPGQTEGGGDPAPESGDSKDAKDN) is disordered.

The protein belongs to the peptidase T1A family. As to quaternary structure, the 20S proteasome core is composed of 14 alpha and 14 beta subunits that assemble into four stacked heptameric rings, resulting in a barrel-shaped structure. The two inner rings, each composed of seven catalytic beta subunits, are sandwiched by two outer rings, each composed of seven alpha subunits. The catalytic chamber with the active sites is on the inside of the barrel. Has a gated structure, the ends of the cylinder being occluded by the N-termini of the alpha-subunits. Is capped by the proteasome-associated ATPase, ARC.

Its subcellular location is the cytoplasm. Its pathway is protein degradation; proteasomal Pup-dependent pathway. The formation of the proteasomal ATPase ARC-20S proteasome complex, likely via the docking of the C-termini of ARC into the intersubunit pockets in the alpha-rings, may trigger opening of the gate for substrate entry. Interconversion between the open-gate and close-gate conformations leads to a dynamic regulation of the 20S proteasome proteolysis activity. Component of the proteasome core, a large protease complex with broad specificity involved in protein degradation. In Mycobacteroides abscessus (strain ATCC 19977 / DSM 44196 / CCUG 20993 / CIP 104536 / JCM 13569 / NCTC 13031 / TMC 1543 / L948) (Mycobacterium abscessus), this protein is Proteasome subunit alpha.